The following is a 315-amino-acid chain: Protein ADP-ribosyltransferase (315 aa).

In terms of domain architecture, Deacetylase sirtuin-type spans 13–299; that stretch reads LMDEKTKQAE…TTALRNDSTT (287 aa). Residues Ala40, 123–126, and Gln143 contribute to the NAD(+) site; that span reads TNAD. Positions 151, 155, 186, and 189 each coordinate Zn(2+). NAD(+) is bound by residues 238 to 240, Asn264, Tyr268, and Ile285; that span reads YTT.

The protein belongs to the sirtuin family. Class M subfamily. Zn(2+) is required as a cofactor.

The catalysed reaction is L-aspartyl-[protein] + NAD(+) = 4-O-(ADP-D-ribosyl)-L-aspartyl-[protein] + nicotinamide. Its activity is regulated as follows. Is inhibited by Tenovin-6 in vitro, but not by nicotinamide. Catalyzes specifically the mono-ADP-ribosylation of GcvH-L (SAV0324). This activity is dependent on prior lipoylation of the target protein. May be involved in the modulation of the response to host-derived oxidative stress. In contrast to other sirtuin classes, lacks protein deacylase activity, being unable to catalyze delipoylation, debiotinylation, deacetylation and desuccinylation of proteins. This is Protein ADP-ribosyltransferase from Staphylococcus aureus (strain Mu50 / ATCC 700699).